The chain runs to 85 residues: Colicin-E6 immunity protein (85 aa).

Belongs to the cloacin immunity protein family.

Functionally, this protein inhibits the 16S RNA hydrolyzing activity of colicin E6 by binding with high affinity to the C-terminal catalytic domain of E6. This protein is able to protect a cell, which harbors the plasmid ColE6 against colicin E6. The sequence is that of Colicin-E6 immunity protein (imm) from Escherichia coli.